The chain runs to 475 residues: MGITAATEMALRRHLVAQLDNQLGGTSYRSVLMYPEKMPRPPWRHETHNYIRSGPGPRFLDAPGQPAGMVAAVVSDGTTVAAGYLTGSGSRAALTSTGRSQLERIAGSRTPLTLDLDGLGRYRVLAAPSRNGHDVIVTGLSMGNVDATMLQMLIIFGIVTVIALVAATTAGIVIIKRALAPLRRVAQTASEVVDLPLDRGEVKLPVRVPEPDANPSTEVGQLGSALNRMLDHIAAALSARQASETCVRQFVADASHELRTPLAAIRGYTELTQRIGDDPEAVAHAMSRVASETERITRLVEDLLLLARLDSGRPLERGPVDMSRLAVDAVSDAHVAGPDHQWALDLPPEPVVIPGDAARLHQVVTNLLANARVHTGPGTIVTTRLSTGPTHVVLQVIDNGPGIPAALQSEVFERFARGDTSRSRQAGSTGLGLAIVSAVVKAHNGTITVSSSPGYTEFAVRLPLDGWQPLESSPR.

Topologically, residues 1 to 153 (MGITAATEMA…NVDATMLQML (153 aa)) are extracellular. A helical membrane pass occupies residues 154-174 (IIFGIVTVIALVAATTAGIVI). The Cytoplasmic portion of the chain corresponds to 175-475 (IKRALAPLRR…GWQPLESSPR (301 aa)). The region spanning 176-238 (KRALAPLRRV…MLDHIAAALS (63 aa)) is the HAMP domain. Positions 253 to 466 (DASHELRTPL…EFAVRLPLDG (214 aa)) constitute a Histidine kinase domain. His-256 carries the phosphohistidine; by autocatalysis modification.

Homodimer. Requires a divalent metal cation as cofactor. Post-translationally, autophosphorylated.

The protein resides in the cell membrane. The catalysed reaction is ATP + protein L-histidine = ADP + protein N-phospho-L-histidine.. Member of the two-component regulatory system TcrY/TcrX. Activates TcrX by phosphorylation. This is Probable sensor histidine kinase TcrY (tcrY) from Mycobacterium tuberculosis (strain ATCC 25618 / H37Rv).